Consider the following 4034-residue polypeptide: Polyketide synthase-nonribosomal peptide synthetase ACE1 (4034 aa).

In terms of domain architecture, Ketosynthase family 3 (KS3) spans 10 to 448 (TEPIAIIGSG…GANAHVILES (439 aa)). Catalysis depends on for beta-ketoacyl synthase activity residues cysteine 183, histidine 322, and histidine 368. Residues 560–879 (VFTGQGAQWA…PYFGCLSRGT (320 aa)) are acyl transferase. The N-terminal hotdog fold stretch occupies residues 951-1082 (NELLGTRLPD…GDLVVLLGEP (132 aa)). The PKS/mFAS DH domain maps to 951-1257 (NELLGTRLPD…TKPLSPPSAA (307 aa)). The interval 952 to 1252 (ELLGTRLPDD…LQGLHTKPLS (301 aa)) is dehydratase (DH) domain. The Proton acceptor; for dehydratase activity role is filled by histidine 983. The C-terminal hotdog fold stretch occupies residues 1097–1257 (MKDIDEERFY…TKPLSPPSAA (161 aa)). The active-site Proton donor; for dehydratase activity is aspartate 1157. Positions 1396–1594 (NMLNRFYSDA…SGADIVTPHH (199 aa)) are methyltransferase (MT) domain. The segment at 2144–2317 (TYWLVGLTGG…AGSSVEIGCI (174 aa)) is ketoreductase (KR)domain. Residues 2424-2505 (KSSEEVLDIL…LLLEFVQGLI (82 aa)) enclose the Carrier 1 domain. The residue at position 2465 (serine 2465) is an O-(pantetheine 4'-phosphoryl)serine. Positions 2512 to 2598 (KLDGSDGADA…SPTTSASMAS (87 aa)) are disordered. Positions 2556–2577 (PSGPASPTSPSSATASPGRSRS) are enriched in low complexity. Residues 2586–2598 (TPVSPTTSASMAS) are compositionally biased toward polar residues. The condensation stretch occupies residues 2608–3037 (TVPVSFGQSR…ATSLNRPAIY (430 aa)). The segment at 3073–3473 (KYATKFALRN…GGLIIEGRID (401 aa)) is adenylation. The region spanning 3598–3678 (AELGSDQARM…AMTDLVLSDD (81 aa)) is the Carrier 2 domain. Position 3638 is an O-(pantetheine 4'-phosphoryl)serine (serine 3638). The interval 3719-3944 (LTGATGFLGR…DFVSVENVAA (226 aa)) is reductase-like.

The protein belongs to the NRP synthetase family.

The protein localises to the cytoplasm. It functions in the pathway secondary metabolite biosynthesis. Hybrid PKS-NRPS synthetase; part of the gene cluster that mediates the biosynthesis of a tyrosine-derived cytochalasan acting as a fungal signal recognized by resistant rice plants and leads to avirulence in Pi33 resistant rice cultivars. The first step in the pathway is catalyzed by the hybrid PKS-NRPS ACE1, assisted by the enoyl reductase RAP1, that are responsible for fusion of the tyrosine precursor and the polyketide backbone. The polyketide synthase module (PKS) of ACE1 is responsible for the synthesis of the polyketide backbone and the downstream nonribosomal peptide synthetase (NRPS) amidates the carboxyl end of the polyketide with the tyrosine precursor. Because ACE1 lacks a designated enoylreductase (ER) domain, the required activity is provided the enoyl reductase RAP1. Reduction by the hydrolyase ORFZ, followed by dehydration and intra-molecular Diels-Alder cyclization by the Diels-Alderase ORF3 then yield the required isoindolone-fused macrocycle. A number of oxidative steps catalyzed by the tailoring enzymes identified within the cluster, including cytochrome P450 monooxygenases CYP1 to CYP4, the FAD-linked oxidoreductase OXR2 and the short-chain dehydrogenase/reductase OXR1, are further required to afford the final cytochalasans that confer avirulence and which have still to be identified. The monooxygenase CYP1 has been shown to be a site-selective C-18 hydroxylase whereas the function of CYP3 is the site-selective epoxidation of the C-6/C-7 olefin that is present in some intermediate compounds. Finally, SYN2 and RAP2 are not required for avirulence in Pi33 resistant rice cultivars. The polypeptide is Polyketide synthase-nonribosomal peptide synthetase ACE1 (Pyricularia oryzae (strain 70-15 / ATCC MYA-4617 / FGSC 8958) (Rice blast fungus)).